A 974-amino-acid polypeptide reads, in one-letter code: ATP-dependent RNA helicase DBP7 (974 aa).

Positions 1 to 135 (MDDNDDGLML…SSAASSSRKA (135 aa)) are disordered. A compositionally biased stretch (low complexity) spans 13–24 (AAPAAGSASVSS). The segment covering 25–48 (KRSKQTAKARFAQKRTAHQLRKQA) has biased composition (basic residues). Low complexity-rich tracts occupy residues 67–85 (PASA…SPAA), 92–102 (ATSTSSAALSA), and 118–133 (TSRS…SSSR). Positions 200–230 (SDFASCGLDPLLVYHLASKMNIGSNPTAIQK) match the Q motif motif. Positions 236 to 477 (LLHPGLDRDI…GKTLVNPKII (242 aa)) constitute a Helicase ATP-binding domain. An ATP-binding site is contributed by 249 to 256 (AQTGSGKT). Residues 381–384 (DEAD) carry the DEAD box motif. Residues 531–747 (LLRSYISRAR…TRKITPASIE (217 aa)) enclose the Helicase C-terminal domain. Positions 836-887 (KSSAIGASSTPASSHETTNKKRMRIAPDTAESDSSSDSSDDAGSDYESHSNK) are disordered. Residues 840 to 851 (IGASSTPASSHE) are compositionally biased toward polar residues.

It belongs to the DEAD box helicase family. DDX31/DBP7 subfamily.

It localises to the nucleus. The protein resides in the nucleolus. It catalyses the reaction ATP + H2O = ADP + phosphate + H(+). In terms of biological role, ATP-binding RNA helicase involved in the biogenesis of 60S ribosomal subunits and is required for the normal formation of 25S and 5.8S rRNAs. This Mycosarcoma maydis (Corn smut fungus) protein is ATP-dependent RNA helicase DBP7 (DBP7).